A 575-amino-acid chain; its full sequence is Beta-amylase 1, chloroplastic (575 aa).

A chloroplast-targeting transit peptide spans 1 to 41; sequence MALNLSHQLGVLAGTPIKSGEMTDSSLLSISPPSARMMTPK. Residues Ser55 and Ser59 each carry the phosphoserine modification. Cysteines 73 and 511 form a disulfide. Residues Asp147, His187, and Asp195 each coordinate substrate. Glu279 serves as the catalytic Proton donor. 3 residues coordinate substrate: Lys392, His397, and Thr439. The active-site Proton acceptor is Glu477. Substrate-binding positions include 478 to 479 and Arg517; that span reads NA.

Belongs to the glycosyl hydrolase 14 family. As to expression, expressed in leaves, roots, flowers, pollen, and seeds.

It is found in the plastid. The protein resides in the chloroplast. The enzyme catalyses Hydrolysis of (1-&gt;4)-alpha-D-glucosidic linkages in polysaccharides so as to remove successive maltose units from the non-reducing ends of the chains.. Its activity is regulated as follows. Redox regulation; active in reducing conditions, inactive in oxidizing conditions. Thioredoxins f1, m1, and y1 mediate the reversible reductive activation of oxidized BAM1. In terms of biological role, beta-amylase activity. Can use p-nitrophenyl maltopentaoside (PNPG5) as substrate only in reduced form. Can play a minor role in the starch degradation and maltose metabolism in chloroplasts during the night. More active on phosphorylated glucan. Interacts directly with starch or other alpha-1,4-glucan. This Arabidopsis thaliana (Mouse-ear cress) protein is Beta-amylase 1, chloroplastic (BAM1).